The sequence spans 442 residues: Transcription factor AP-2-epsilon (442 aa).

The PPxY motif motif lies at 54–59; sequence YFPPPY. A Phosphoserine; by PKA modification is found at S246. Residues 287-417 are H-S-H (helix-span-helix), dimerization; that stretch reads RRKAANVTLL…YLLESLKGLD (131 aa).

It belongs to the AP-2 family. In terms of assembly, binds DNA as a dimer. Can form homodimers or heterodimers with other AP-2 family members. In terms of tissue distribution, expressed in skin, primary keratinocytes, immortalized keratinocytes, and HeLa cell line.

It localises to the nucleus. In terms of biological role, sequence-specific DNA-binding protein that interacts with inducible viral and cellular enhancer elements to regulate transcription of selected genes. AP-2 factors bind to the consensus sequence 5'-GCCNNNGGC-3' and activate genes involved in a large spectrum of important biological functions including proper eye, face, body wall, limb and neural tube development. They also suppress a number of genes including MCAM/MUC18, C/EBP alpha and MYC. AP-2-epsilon may play a role in the development of the CNS and in cartilage differentiation. The chain is Transcription factor AP-2-epsilon from Homo sapiens (Human).